The chain runs to 181 residues: MSLDNLTIASRYSKALFELAVEKDQTEAFLAELKQLRQVFVDNPQLAEVLSGSLLPVDQKQTTLSTLTDHASEYIKNFIQMLYDYGRMSNLVGIVDAFEARFDESRKIVHAEVTSAVKLSDEQADAIAKAFAKRVGANQVVLSRKVDEAIIGGVIVKSNNQTFDGSVALQLTNLRRALINN.

This sequence belongs to the ATPase delta chain family. In terms of assembly, F-type ATPases have 2 components, F(1) - the catalytic core - and F(0) - the membrane proton channel. F(1) has five subunits: alpha(3), beta(3), gamma(1), delta(1), epsilon(1). F(0) has three main subunits: a(1), b(2) and c(10-14). The alpha and beta chains form an alternating ring which encloses part of the gamma chain. F(1) is attached to F(0) by a central stalk formed by the gamma and epsilon chains, while a peripheral stalk is formed by the delta and b chains.

Its subcellular location is the cell membrane. Functionally, f(1)F(0) ATP synthase produces ATP from ADP in the presence of a proton or sodium gradient. F-type ATPases consist of two structural domains, F(1) containing the extramembraneous catalytic core and F(0) containing the membrane proton channel, linked together by a central stalk and a peripheral stalk. During catalysis, ATP synthesis in the catalytic domain of F(1) is coupled via a rotary mechanism of the central stalk subunits to proton translocation. Its function is as follows. This protein is part of the stalk that links CF(0) to CF(1). It either transmits conformational changes from CF(0) to CF(1) or is implicated in proton conduction. The polypeptide is ATP synthase subunit delta (Lactiplantibacillus plantarum (strain ATCC BAA-793 / NCIMB 8826 / WCFS1) (Lactobacillus plantarum)).